The sequence spans 130 residues: Glycine cleavage system H protein (130 aa).

The 83-residue stretch at 24-106 (TVTIGITDHA…YDDGWFFKVK (83 aa)) folds into the Lipoyl-binding domain. Lysine 65 carries the N6-lipoyllysine modification.

This sequence belongs to the GcvH family. As to quaternary structure, the glycine cleavage system is composed of four proteins: P, T, L and H. (R)-lipoate is required as a cofactor.

The glycine cleavage system catalyzes the degradation of glycine. The H protein shuttles the methylamine group of glycine from the P protein to the T protein. This chain is Glycine cleavage system H protein, found in Saccharophagus degradans (strain 2-40 / ATCC 43961 / DSM 17024).